The following is a 236-amino-acid chain: MGGDAFTFELFGLTFNWTNLISGTIVFVITFFLLFGLSRHLQMKPTGGQNVLEWIVEFTNGIVRGQMPSETSGFYSFFVFVLFVFLFISNQLGLIIQFGWNGHEIVKSPTADPVVTMTLALCAVTLSHFAGVARQGVKGYFADYFKPFSLMFPIKLVEEFSNFLTLGLRIFGNIYAGELLLKLLAGMAFSHGIPTMIVSLPLEIIWQGFSVFIGAIQAYVFVTLTTVYISRKVTGE.

Transmembrane regions (helical) follow at residues 17 to 37, 76 to 96, 113 to 133, 170 to 190, and 196 to 216; these read WTNL…LFGL, SFFV…GLII, PVVT…AGVA, IFGN…MAFS, and MIVS…IGAI.

Belongs to the ATPase A chain family. In terms of assembly, F-type ATPases have 2 components, CF(1) - the catalytic core - and CF(0) - the membrane proton channel. CF(1) has five subunits: alpha(3), beta(3), gamma(1), delta(1), epsilon(1). CF(0) has three main subunits: a(1), b(2) and c(9-12). The alpha and beta chains form an alternating ring which encloses part of the gamma chain. CF(1) is attached to CF(0) by a central stalk formed by the gamma and epsilon chains, while a peripheral stalk is formed by the delta and b chains.

The protein localises to the cell membrane. In terms of biological role, key component of the proton channel; it plays a direct role in the translocation of protons across the membrane. In Limosilactobacillus fermentum (strain NBRC 3956 / LMG 18251) (Lactobacillus fermentum), this protein is ATP synthase subunit a.